We begin with the raw amino-acid sequence, 161 residues long: Cyclic pyranopterin monophosphate synthase (161 aa).

Residues 73–75 (LCH) and 110–111 (ME) contribute to the substrate site. D125 is a catalytic residue.

It belongs to the MoaC family. Homohexamer; trimer of dimers.

It catalyses the reaction (8S)-3',8-cyclo-7,8-dihydroguanosine 5'-triphosphate = cyclic pyranopterin phosphate + diphosphate. The protein operates within cofactor biosynthesis; molybdopterin biosynthesis. Catalyzes the conversion of (8S)-3',8-cyclo-7,8-dihydroguanosine 5'-triphosphate to cyclic pyranopterin monophosphate (cPMP). This Pseudomonas syringae pv. syringae (strain B728a) protein is Cyclic pyranopterin monophosphate synthase.